The primary structure comprises 640 residues: Probable potassium transport system protein Kup 1 (640 aa).

The next 12 helical transmembrane spans lie at 24–44 (LGAL…TSPL), 67–87 (IASL…VLFV), 116–136 (VGPL…DGMI), 154–174 (PFFA…LFTI), 186–206 (FGPV…TEVV), 222–242 (TFLF…VLAV), 264–284 (WFAL…ALIL), 296–316 (MLVP…ATVI), 354–374 (IYIP…VVGF), 382–402 (AAYG…ALVV), 411–431 (LWLC…FLGA), and 436–456 (VTQG…LMAT).

The protein belongs to the HAK/KUP transporter (TC 2.A.72) family.

It is found in the cell inner membrane. The enzyme catalyses K(+)(in) + H(+)(in) = K(+)(out) + H(+)(out). Transport of potassium into the cell. Likely operates as a K(+):H(+) symporter. This Paramagnetospirillum magneticum (strain ATCC 700264 / AMB-1) (Magnetospirillum magneticum) protein is Probable potassium transport system protein Kup 1.